A 310-amino-acid chain; its full sequence is p-hydroxybenzoic acid efflux pump subunit AaeA (310 aa).

Residues 12 to 32 form a helical membrane-spanning segment; the sequence is AITLVLVILAFIAIFRAWVYY.

This sequence belongs to the membrane fusion protein (MFP) (TC 8.A.1) family.

The protein localises to the cell inner membrane. Its function is as follows. Forms an efflux pump with AaeB. In Salmonella arizonae (strain ATCC BAA-731 / CDC346-86 / RSK2980), this protein is p-hydroxybenzoic acid efflux pump subunit AaeA.